Here is a 156-residue protein sequence, read N- to C-terminus: Small ribosomal subunit protein uS7 (156 aa).

This sequence belongs to the universal ribosomal protein uS7 family. As to quaternary structure, part of the 30S ribosomal subunit. Contacts proteins S9 and S11.

One of the primary rRNA binding proteins, it binds directly to 16S rRNA where it nucleates assembly of the head domain of the 30S subunit. Is located at the subunit interface close to the decoding center, probably blocks exit of the E-site tRNA. This chain is Small ribosomal subunit protein uS7, found in Lawsonia intracellularis (strain PHE/MN1-00).